The following is an 856-amino-acid chain: Envelope glycoprotein GP350 (856 aa).

The Virion surface segment spans residues 1–809 (MEAALLVCQY…TSQPRFSNLS (809 aa)). Residues Asn47, Asn87, Asn114, Asn166, Asn169, Asn195, Asn229, Asn277, Asn318, Asn328, Asn345, Asn356, Asn378, Asn386, Asn411, Asn435, Asn443, Asn457, Asn497, Asn519, Asn533, Asn554, Asn568, Asn582, Asn585, Asn603, and Asn614 are each glycosylated (N-linked (GlcNAc...) asparagine; by host). Residues 421-779 (FSKAPESTTT…PPSTSSELRP (359 aa)) form a disordered region. A compositionally biased stretch (low complexity) spans 427–437 (STTTSPTSNTT). Residues 442–488 (PNTTTGLPSSTHVPTNLTAPASTGPTVSTADVTSPTPAGTTSGASPV) are compositionally biased toward polar residues. Residues 507-570 (TSPTPAVTTP…AVTTPTPNAT (64 aa)) are compositionally biased toward low complexity. The segment covering 575 to 616 (GETSPQANTTNHTLGGTSSTPVVTSQPKNATSAVTTGQHNIT) has biased composition (polar residues). A compositionally biased stretch (low complexity) spans 617-631 (SSSTSSMSLRPSSIS). A glycan (N-linked (GlcNAc...) asparagine; by host) is linked at Asn650. Over residues 654 to 669 (VTPASTSTHHVSTSSP) the composition is skewed to low complexity. Residues 674–690 (GTTSQASGPGNSSTSTK) show a composition bias toward polar residues. 4 N-linked (GlcNAc...) asparagine; by host glycosylation sites follow: Asn684, Asn695, Asn704, and Asn729. The segment covering 703–730 (KNATSPQAPSGQKTAVPTVTSTGGKANS) has biased composition (polar residues). Residues 731–741 (TTGGKHTTGHG) show a composition bias toward low complexity. The span at 743–776 (RTSTEPTTDYGGDSTTPRTRYNATTYLPPSTSSE) shows a compositional bias: polar residues. Residues Asn764 and Asn807 are each glycosylated (N-linked (GlcNAc...) asparagine; by host). A helical transmembrane segment spans residues 810-830 (MLVLQWASLAVLTLLLLLVMA). At 831-856 (DCAFRRNLSTSHTYTTPPYDDAETYV) the chain is on the intravirion side.

It belongs to the Epstein-Barr GP350 family. As to quaternary structure, interacts with host CR2. Post-translationally, extensively glycosylated.

It is found in the virion membrane. It localises to the host membrane. Initiates virion attachment to host B-lymphocyte cell, leading to virus entry. Acts by binding to host CR2 at the surface of B-lymphocytes, facilitating the binding of viral glycoprotein gp42 to HLA class II molecules. Attachment triggers virion-host membrane fusion and invasion of the host cell. This is Envelope glycoprotein GP350 from Homo sapiens (Human).